Here is a 238-residue protein sequence, read N- to C-terminus: Adapter protein MecA (238 aa).

A disordered region spans residues 108–133 (EDENEESVQGNQQQRRSHASDHSKRA).

Belongs to the MecA family. Homodimer.

Functionally, enables the recognition and targeting of unfolded and aggregated proteins to the ClpC protease or to other proteins involved in proteolysis. In Staphylococcus carnosus (strain TM300), this protein is Adapter protein MecA.